The primary structure comprises 167 residues: NAD(P)H-quinone oxidoreductase subunit I, chloroplastic (167 aa).

2 4Fe-4S ferredoxin-type domains span residues 55 to 84 (GRIHFEFDKCIACEVCVRVCPINLPVVDWI) and 95 to 124 (KNYSIDFGVCIFCGNCVEYCPTNCLSMTEE). Residues C64, C67, C70, C74, C104, C107, C110, and C114 each contribute to the [4Fe-4S] cluster site.

It belongs to the complex I 23 kDa subunit family. NDH is composed of at least 16 different subunits, 5 of which are encoded in the nucleus. Requires [4Fe-4S] cluster as cofactor.

It is found in the plastid. It localises to the chloroplast thylakoid membrane. The catalysed reaction is a plastoquinone + NADH + (n+1) H(+)(in) = a plastoquinol + NAD(+) + n H(+)(out). It catalyses the reaction a plastoquinone + NADPH + (n+1) H(+)(in) = a plastoquinol + NADP(+) + n H(+)(out). Functionally, NDH shuttles electrons from NAD(P)H:plastoquinone, via FMN and iron-sulfur (Fe-S) centers, to quinones in the photosynthetic chain and possibly in a chloroplast respiratory chain. The immediate electron acceptor for the enzyme in this species is believed to be plastoquinone. Couples the redox reaction to proton translocation, and thus conserves the redox energy in a proton gradient. The polypeptide is NAD(P)H-quinone oxidoreductase subunit I, chloroplastic (Adiantum capillus-veneris (Maidenhair fern)).